The primary structure comprises 118 residues: MTKNIHDVAYELQKAIAENDDFKTLKESYAAVQADAASKNLFDEFRTMQLSLQQKMMQGQEITEEDNQQAQEVVARIQQDAKITKLMETEQRLNVVIGDVNKIIMKPLEELYSAQQQA.

It belongs to the UPF0342 family.

The chain is UPF0342 protein BCE_0953 from Bacillus cereus (strain ATCC 10987 / NRS 248).